Reading from the N-terminus, the 407-residue chain is Serine/threonine transporter SstT (407 aa).

Helical transmembrane passes span 11-31 (IIHG…VILA), 43-63 (FLGD…VFVL), 82-102 (IISL…LLSF), 141-161 (ALMT…GIAL), 192-212 (LGIF…ALAG), 216-236 (LLMV…PLIV), 298-318 (MGGA…TLGV), 339-359 (ASGV…LFGI), and 363-383 (IAMQ…SAET).

It belongs to the dicarboxylate/amino acid:cation symporter (DAACS) (TC 2.A.23) family.

The protein localises to the cell inner membrane. The catalysed reaction is L-serine(in) + Na(+)(in) = L-serine(out) + Na(+)(out). It catalyses the reaction L-threonine(in) + Na(+)(in) = L-threonine(out) + Na(+)(out). Functionally, involved in the import of serine and threonine into the cell, with the concomitant import of sodium (symport system). The chain is Serine/threonine transporter SstT from Shewanella denitrificans (strain OS217 / ATCC BAA-1090 / DSM 15013).